We begin with the raw amino-acid sequence, 62 residues long: Large ribosomal subunit protein bL28 (62 aa).

This sequence belongs to the bacterial ribosomal protein bL28 family.

This is Large ribosomal subunit protein bL28 from Koribacter versatilis (strain Ellin345).